The chain runs to 234 residues: uncharacterized protein (234 aa).

Residues 24–83 enclose the HTH tetR-type domain; that stretch reads VERRNELVDGTIEAIRRHGRFLSMDEIAAEIGVSKTVLYRYFVDKNDLTTAVMMRFTQTT. Residues 46-65 constitute a DNA-binding region (H-T-H motif); it reads SMDEIAAEIGVSKTVLYRYF.

This is an uncharacterized protein from Mycobacterium tuberculosis (strain CDC 1551 / Oshkosh).